Here is an 869-residue protein sequence, read N- to C-terminus: MRVLSAIALVASLASSALSAPASESRVSTQLRSRDAEGYSSPPYYPAPNGGWLSSWADAYEKAQRVVRDMTLAEKVNLTTGTGIFMGPCVGQTGSALRFGIPNLCLQDSPLGVRNSDHNTAFPAGITVGATFDKDLMYARGVELGKEFRGKGINVLLGPSVGPIGRKPRGGRNWEGFGADPSLQAIGGAQTIKGIQSQGVIATIKHYIGNEQEMYRMSNVGQRAYSSNIDDRTLHEVYLWPFAEGIRAGVGAVMTAYNEVNSSACSQNSKLLNEILKDELGFQGFVMTDWLGQYGGVSSALAGLDMAMPGDGAIPLLGTAYWGSELSRSILNGSVPVSRLNDMVTRIVAAWYKMGQDGEFPLPNFSSNTQDATGPLYPGALFSPSGVVNQYVNVQADHNITARAIARDAITLLKNDDNILPLKKDDALKVFGTDAGPNPDGLNSCADMGCNKGVLTMGWGSGTSRLPYLVTPQEAIANISSNAAFFITDNFPSNVAVSSGDVAVVFISADSGENYITVEGNPGDRTSAGLNAWHNGDKLVKDAAAKFSKVVVVVHTVGPILMEEWIDLPSVKAVLVAHLPGQEAGWSLTDVLFGDYSPSGHLPYTIPRAESDYPSSVGLLSQPIVQIQDTYTEGLYIDYRLFLKANITPRYPFGHGLSYTTFSFSQPTLSVRTALDSTYPPTRPPKGPTPTYPTAIPDPSEVAWPKNFGRIWRYLYPYLDDPASAAKNSSKTYPYPAGYTTVPKPAPRAGGAEGGNPALFDVAFAVSVTVTNTGSRPGRAVAQLYVELPDSLGETPSRQLRQFAKTKTLAPGTSETLTMEITRKDISVWDVVVQDWKAPVRGEGVKIWLGESVLDMRAVCEVGGACRVI.

Residues 1 to 19 form the signal peptide; it reads MRVLSAIALVASLASSALS. N-linked (GlcNAc...) asparagine glycans are attached at residues N77 and N261. The active site involves D289. N332, N364, N399, and N478 each carry an N-linked (GlcNAc...) asparagine glycan. A disordered region spans residues 677 to 697; sequence STYPPTRPPKGPTPTYPTAIP. The segment covering 681–691 has biased composition (pro residues); sequence PTRPPKGPTPT. The N-linked (GlcNAc...) asparagine glycan is linked to N728.

It belongs to the glycosyl hydrolase 3 family.

The protein resides in the secreted. The enzyme catalyses Hydrolysis of terminal, non-reducing beta-D-glucosyl residues with release of beta-D-glucose.. Its pathway is glycan metabolism; cellulose degradation. Its function is as follows. Beta-glucosidases are one of a number of cellulolytic enzymes involved in the degradation of cellulosic biomass. Catalyzes the last step releasing glucose from the inhibitory cellobiose. This is Probable beta-glucosidase F (bglF) from Aspergillus fumigatus (strain ATCC MYA-4609 / CBS 101355 / FGSC A1100 / Af293) (Neosartorya fumigata).